The following is a 341-amino-acid chain: Heme A synthase (341 aa).

5 consecutive transmembrane segments (helical) span residues Ala11–Gly31, Leu101–Ala121, Leu127–Ser147, Leu160–Glu180, and Ala194–Val214. His259 is a binding site for heme. 3 helical membrane passes run Trp261–Trp278, Phe288–Leu308, and Leu315–Trp335. His319 contacts heme.

It belongs to the COX15/CtaA family. Type 2 subfamily. Interacts with CtaB. Heme b is required as a cofactor.

It localises to the cell membrane. The catalysed reaction is Fe(II)-heme o + 2 A + H2O = Fe(II)-heme a + 2 AH2. The protein operates within porphyrin-containing compound metabolism; heme A biosynthesis; heme A from heme O: step 1/1. In terms of biological role, catalyzes the conversion of heme O to heme A by two successive hydroxylations of the methyl group at C8. The first hydroxylation forms heme I, the second hydroxylation results in an unstable dihydroxymethyl group, which spontaneously dehydrates, resulting in the formyl group of heme A. The protein is Heme A synthase of Maricaulis maris (strain MCS10) (Caulobacter maris).